Here is a 482-residue protein sequence, read N- to C-terminus: tRNA sulfurtransferase (482 aa).

Positions 61–165 constitute a THUMP domain; sequence LAIRDALTRI…DDRLLLIKGR (105 aa). ATP-binding positions include 183–184, lysine 265, glycine 287, and glutamine 296; that span reads LI. An intrachain disulfide couples cysteine 344 to cysteine 456. In terms of domain architecture, Rhodanese spans 404-482; sequence FGPNDVILDI…GFNNVKVYRP (79 aa). Cysteine 456 (cysteine persulfide intermediate) is an active-site residue.

It belongs to the ThiI family.

It localises to the cytoplasm. The catalysed reaction is [ThiI sulfur-carrier protein]-S-sulfanyl-L-cysteine + a uridine in tRNA + 2 reduced [2Fe-2S]-[ferredoxin] + ATP + H(+) = [ThiI sulfur-carrier protein]-L-cysteine + a 4-thiouridine in tRNA + 2 oxidized [2Fe-2S]-[ferredoxin] + AMP + diphosphate. It carries out the reaction [ThiS sulfur-carrier protein]-C-terminal Gly-Gly-AMP + S-sulfanyl-L-cysteinyl-[cysteine desulfurase] + AH2 = [ThiS sulfur-carrier protein]-C-terminal-Gly-aminoethanethioate + L-cysteinyl-[cysteine desulfurase] + A + AMP + 2 H(+). The protein operates within cofactor biosynthesis; thiamine diphosphate biosynthesis. Its function is as follows. Catalyzes the ATP-dependent transfer of a sulfur to tRNA to produce 4-thiouridine in position 8 of tRNAs, which functions as a near-UV photosensor. Also catalyzes the transfer of sulfur to the sulfur carrier protein ThiS, forming ThiS-thiocarboxylate. This is a step in the synthesis of thiazole, in the thiamine biosynthesis pathway. The sulfur is donated as persulfide by IscS. This Escherichia coli O9:H4 (strain HS) protein is tRNA sulfurtransferase.